A 126-amino-acid polypeptide reads, in one-letter code: Glycine cleavage system H protein (126 aa).

The 82-residue stretch at 24-105 folds into the Lipoyl-binding domain; that stretch reads TLTVGITDHA…AYGVWLFKIK (82 aa). N6-lipoyllysine is present on Lys-65.

This sequence belongs to the GcvH family. The glycine cleavage system is composed of four proteins: P, T, L and H. It depends on (R)-lipoate as a cofactor.

In terms of biological role, the glycine cleavage system catalyzes the degradation of glycine. The H protein shuttles the methylamine group of glycine from the P protein to the T protein. This chain is Glycine cleavage system H protein, found in Burkholderia ambifaria (strain MC40-6).